The following is a 209-amino-acid chain: Uracil phosphoribosyltransferase (209 aa).

Residues R79, R104, and 131–139 (DPMLATGGS) contribute to the 5-phospho-alpha-D-ribose 1-diphosphate site. Residues I194 and 199-201 (GDA) each bind uracil. A 5-phospho-alpha-D-ribose 1-diphosphate-binding site is contributed by D200.

Belongs to the UPRTase family. It depends on Mg(2+) as a cofactor.

It carries out the reaction UMP + diphosphate = 5-phospho-alpha-D-ribose 1-diphosphate + uracil. The protein operates within pyrimidine metabolism; UMP biosynthesis via salvage pathway; UMP from uracil: step 1/1. With respect to regulation, allosterically activated by GTP. Its function is as follows. Catalyzes the conversion of uracil and 5-phospho-alpha-D-ribose 1-diphosphate (PRPP) to UMP and diphosphate. This is Uracil phosphoribosyltransferase from Exiguobacterium sp. (strain ATCC BAA-1283 / AT1b).